We begin with the raw amino-acid sequence, 422 residues long: MNDVWDELQWRGLVAHSTDEAALQEALQTGPLTYYVGFDPTAASLHVGHLVQVLTAKRLQQAGHRPLILVGGATGLVGDPRPSAERTMNDPSVVAGWVTGLQGQIAPFLDFDGPAAATMVNNLDWTQSMSTIEFLRDVGKHFSVNRMLDREAVSKRLATTGISFTEFSYVLLQSNDYLQLHRRHGCTLQLGGSDQWGNITAGCELVRRVDQRTVHALATPLLTKADGTKFGKTESGAVWLDPELTSPYAFHQFWLNAEDAKVVDYLKAFSFRPREEIEELGRQAVENPRARAAQRALAHEVTALVHGEEAAVAVEAAAAALFGGSDLEAIDERILRGALAELPTAAPADRDVRLAQLFADTGLAPSLSGARRTIGEGGAYVNNIKLTDPEATLRDVQLLHGRYAVLRRGKKSLASVAVPLPQ.

Position 35 (Tyr-35) interacts with L-tyrosine. Residues 40–49 (PTAASLHVGH) carry the 'HIGH' region motif. L-tyrosine contacts are provided by Tyr-169 and Gln-173. The 'KMSKS' region signature appears at 229–233 (KFGKT). Lys-232 contacts ATP. The 67-residue stretch at 352 to 418 (VRLAQLFADT…GKKSLASVAV (67 aa)) folds into the S4 RNA-binding domain.

Belongs to the class-I aminoacyl-tRNA synthetase family. TyrS type 1 subfamily. Homodimer.

The protein resides in the cytoplasm. It catalyses the reaction tRNA(Tyr) + L-tyrosine + ATP = L-tyrosyl-tRNA(Tyr) + AMP + diphosphate + H(+). Catalyzes the attachment of tyrosine to tRNA(Tyr) in a two-step reaction: tyrosine is first activated by ATP to form Tyr-AMP and then transferred to the acceptor end of tRNA(Tyr). This is Tyrosine--tRNA ligase from Kineococcus radiotolerans (strain ATCC BAA-149 / DSM 14245 / SRS30216).